A 571-amino-acid chain; its full sequence is Optineurin (571 aa).

2 disordered regions span residues 1-32 (MSHQ…HPNL) and 100-144 (LSHE…DQLR). Positions 38–170 (EELLQQMKEL…VSELQLKLNS (133 aa)) form a coiled coil. The interaction with Rab8 stretch occupies residues 58–209 (MKLNNQAMKG…GPTRTVSIGT (152 aa)). 2 stretches are compositionally biased toward basic and acidic residues: residues 100–123 (LSHE…RSSE) and 130–143 (RLPR…KDQL). Residues 176–181 (DSFVEI) carry the LIR motif. Serine 177 carries the phosphoserine; by TBK1 modification. The span at 186 to 197 (GEAEGSVKEIKH) shows a compositional bias: basic and acidic residues. Disordered stretches follow at residues 186-210 (GEAE…IGTS) and 255-291 (VSDF…TVGS). Residue serine 198 is modified to Phosphoserine. A compositionally biased stretch (polar residues) spans 201 to 210 (PTRTVSIGTS). A coiled-coil region spans residues 233-502 (CLREGNQKVE…LLKENDAFED (270 aa)). Basic and acidic residues-rich tracts occupy residues 255–268 (VSDF…RSEI) and 275–286 (STEKENEEEKGP). Serine 336 is modified (phosphoserine). The interaction with HD stretch occupies residues 405-571 (TRKESEKVDR…LQIHVMDCII (167 aa)). The tract at residues 406 to 514 (RKESEKVDRA…RQSLMEMQSR (109 aa)) is interaction with MYO6. A UBAN motif is present at residues 468–473 (DFHAER). Serine 520 is modified (phosphoserine). Residues 541–571 (QRNIPIHSCPKCGEVLPDIDTLQIHVMDCII) form a CCHC NOA-type zinc finger. Positions 549, 552, 565, and 569 each coordinate Zn(2+).

In terms of assembly, self-associates. Interacts with HD. Interacts with GTF3A. Interacts with MYO6. Interacts (via UBAN) with ubiquitinated TFRC. Interacts with GTP-bound Rab8 (RAB8A and/or RAB8B). Interacts with TBC1D17. Interacts with TBK1. Interacts with TRAF3. Binds to linear ubiquitin chains. Interacts with LC3 family members MAP1LC3A, MAP1LC3B, GABARAP, GABARAPL1 and GABARAPL2; OPTN phosphorylation increases the association (at least with MAP1LC3B). Interacts with RAB12; the interaction may be indirect. Interacts with TBK1; this interaction leads to the Golgi localization of TBK1 and its subsequent activation. Interacts with palmitoyltransferase ZDHHC17/HIP14; the interaction does not lead to palmitoylation of OPTN. Interacts with CYLD. Interacts with TOM1; the interaction is indirect and is mediated by MYO6, which acts as a bridge between TOM1 and OPTN. Interacts with USP12; the interaction is independent of USP12 deubiquitinase activity and may be involved in regulation of autophagic flux. In terms of processing, phosphorylated by TBK1, leading to restrict bacterial proliferation in case of infection.

The protein resides in the cytoplasm. It is found in the perinuclear region. Its subcellular location is the golgi apparatus. It localises to the trans-Golgi network. The protein localises to the cytoplasmic vesicle. The protein resides in the autophagosome. It is found in the recycling endosome. Plays an important role in the maintenance of the Golgi complex, in membrane trafficking, in exocytosis, through its interaction with myosin VI and Rab8. Links myosin VI to the Golgi complex and plays an important role in Golgi ribbon formation. Negatively regulates the induction of IFNB in response to RNA virus infection. Plays a neuroprotective role in the eye and optic nerve. Probably part of the TNF-alpha signaling pathway that can shift the equilibrium toward induction of cell death. May act by regulating membrane trafficking and cellular morphogenesis via a complex that contains Rab8 and huntingtin (HD). Mediates the interaction of Rab8 with the probable GTPase-activating protein TBC1D17 during Rab8-mediated endocytic trafficking, such as that of transferrin receptor (TFRC/TfR); regulates Rab8 recruitment to tubules emanating from the endocytic recycling compartment. Autophagy receptor that interacts directly with both the cargo to become degraded and an autophagy modifier of the MAP1 LC3 family; targets ubiquitin-coated bacteria (xenophagy) and appears to function in the same pathway as SQSTM1 and CALCOCO2/NDP52. The chain is Optineurin (OPTN) from Macaca fascicularis (Crab-eating macaque).